Reading from the N-terminus, the 508-residue chain is UDP-N-acetylmuramoylalanine--D-glutamate ligase (508 aa).

Residue 138–144 (GTNGKTT) participates in ATP binding.

Belongs to the MurCDEF family.

It is found in the cytoplasm. It carries out the reaction UDP-N-acetyl-alpha-D-muramoyl-L-alanine + D-glutamate + ATP = UDP-N-acetyl-alpha-D-muramoyl-L-alanyl-D-glutamate + ADP + phosphate + H(+). The protein operates within cell wall biogenesis; peptidoglycan biosynthesis. Its function is as follows. Cell wall formation. Catalyzes the addition of glutamate to the nucleotide precursor UDP-N-acetylmuramoyl-L-alanine (UMA). In Bordetella avium (strain 197N), this protein is UDP-N-acetylmuramoylalanine--D-glutamate ligase.